A 465-amino-acid chain; its full sequence is Cytochrome P450 85A2 (465 aa).

The helical transmembrane segment at glycine 2 to leucine 22 threads the bilayer. Cysteine 415 lines the heme pocket. Residue cysteine 462 is the site of S-farnesyl cysteine attachment. The Farnesylation CAAX motif signature appears at cysteine 462–tyrosine 465.

The protein belongs to the cytochrome P450 family. The cofactor is heme. In terms of processing, isoprenylated (farnesylated); this addition of a 15-carbon farnesyl isoprenoid to the carboxy terminus is required for endoplasmic reticulum localization and essential for the biosynthesis of brassinolide. In terms of tissue distribution, expressed in stems, hypocotyls, leaves, siliques, shoots, and roots, with a higher expression in apical shoots.

Its subcellular location is the membrane. The protein localises to the endoplasmic reticulum. It catalyses the reaction 6-deoxoteasterone + reduced [NADPH--hemoprotein reductase] + O2 = 6alpha-hydroxyteasterone + oxidized [NADPH--hemoprotein reductase] + H2O + H(+). The catalysed reaction is 6alpha-hydroxytyphasterol + reduced [NADPH--hemoprotein reductase] + O2 = teasterone + oxidized [NADPH--hemoprotein reductase] + 2 H2O + H(+). The enzyme catalyses 3-dehydro-6-deoxoteasterone + reduced [NADPH--hemoprotein reductase] + O2 = 3-dehydro-6alpha-hydroxyteasterone + oxidized [NADPH--hemoprotein reductase] + H2O + H(+). It carries out the reaction 3-dehydro-6alpha-hydroxyteasterone + reduced [NADPH--hemoprotein reductase] + O2 = 3-dehydroteasterone + oxidized [NADPH--hemoprotein reductase] + 2 H2O + H(+). It catalyses the reaction 6-deoxotyphasterol + reduced [NADPH--hemoprotein reductase] + O2 = 6alpha-hydroxytyphasterol + oxidized [NADPH--hemoprotein reductase] + H2O + H(+). The catalysed reaction is 6alpha-hydroxytyphasterol + reduced [NADPH--hemoprotein reductase] + O2 = typhasterol + oxidized [NADPH--hemoprotein reductase] + 2 H2O + H(+). The enzyme catalyses 6-deoxocastasterone + reduced [NADPH--hemoprotein reductase] + O2 = 6alpha-hydroxycastasterone + oxidized [NADPH--hemoprotein reductase] + H2O + H(+). It carries out the reaction 6alpha-hydroxycastasterone + reduced [NADPH--hemoprotein reductase] + O2 = castasterone + oxidized [NADPH--hemoprotein reductase] + 2 H2O + H(+). It catalyses the reaction 6-deoxo-28-norteasterone + 2 reduced [NADPH--hemoprotein reductase] + 2 O2 = 28-norteasterone + 2 oxidized [NADPH--hemoprotein reductase] + 3 H2O + 2 H(+). The catalysed reaction is 6-deoxo-28-norteasterone + reduced [NADPH--hemoprotein reductase] + O2 = 6alpha-hydroxy-28-norteasterone + oxidized [NADPH--hemoprotein reductase] + H2O + H(+). The enzyme catalyses 6alpha-hydroxy-28-norteasterone + reduced [NADPH--hemoprotein reductase] + O2 = 28-norteasterone + oxidized [NADPH--hemoprotein reductase] + 2 H2O + H(+). It carries out the reaction 6-deoxo-28-nortyphasterol + 2 reduced [NADPH--hemoprotein reductase] + 2 O2 = 28-nortyphasterol + 2 oxidized [NADPH--hemoprotein reductase] + 3 H2O + 2 H(+). It catalyses the reaction 6-deoxo-28-nortyphasterol + reduced [NADPH--hemoprotein reductase] + O2 = 6alpha-hydroxy-28-nortyphasterol + oxidized [NADPH--hemoprotein reductase] + H2O + H(+). The catalysed reaction is 6alpha-hydroxy-28-nortyphasterol + reduced [NADPH--hemoprotein reductase] + O2 = 28-nortyphasterol + oxidized [NADPH--hemoprotein reductase] + 2 H2O + H(+). The enzyme catalyses 6-deoxo-28-norcastasterone + 2 reduced [NADPH--hemoprotein reductase] + 2 O2 = 28-norcastasterone + 2 oxidized [NADPH--hemoprotein reductase] + 3 H2O + 2 H(+). It carries out the reaction 6-deoxo-28-norcastasterone + reduced [NADPH--hemoprotein reductase] + O2 = 6alpha-hydroxy-28-norcastasterone + oxidized [NADPH--hemoprotein reductase] + H2O + H(+). It catalyses the reaction 6alpha-hydroxy-28-norcastasterone + reduced [NADPH--hemoprotein reductase] + O2 = 28-norcastasterone + oxidized [NADPH--hemoprotein reductase] + 2 H2O + H(+). The catalysed reaction is 3-dehydro-6-deoxo-28-norteasterone + 2 reduced [NADPH--hemoprotein reductase] + 2 O2 = 6-dehydro-28-norteasterone + 2 oxidized [NADPH--hemoprotein reductase] + 3 H2O + 2 H(+). The enzyme catalyses 3-dehydro-6-deoxo-28-norteasterone + reduced [NADPH--hemoprotein reductase] + O2 = 3-dehydro-6alpha-hydroxy-28-norteasterone + oxidized [NADPH--hemoprotein reductase] + H2O + H(+). It carries out the reaction 3-dehydro-6alpha-hydroxy-28-norteasterone + reduced [NADPH--hemoprotein reductase] + O2 = 6-dehydro-28-norteasterone + oxidized [NADPH--hemoprotein reductase] + 2 H2O + H(+). It catalyses the reaction teasterone + reduced [NADPH--hemoprotein reductase] + O2 = 7-oxateasterone + oxidized [NADPH--hemoprotein reductase] + H2O + H(+). The catalysed reaction is castasterone + reduced [NADPH--hemoprotein reductase] + O2 = brassinolide + oxidized [NADPH--hemoprotein reductase] + H2O + H(+). The enzyme catalyses typhasterol + reduced [NADPH--hemoprotein reductase] + O2 = 7-oxatyphasterol + oxidized [NADPH--hemoprotein reductase] + H2O + H(+). It carries out the reaction 6-deoxocastasterone + 2 reduced [NADPH--hemoprotein reductase] + 2 O2 = castasterone + 2 oxidized [NADPH--hemoprotein reductase] + 3 H2O + 2 H(+). It catalyses the reaction 6-deoxoteasterone + 2 reduced [NADPH--hemoprotein reductase] + 2 O2 = teasterone + 2 oxidized [NADPH--hemoprotein reductase] + 3 H2O + 2 H(+). The catalysed reaction is 6-deoxotyphasterol + 2 reduced [NADPH--hemoprotein reductase] + 2 O2 = typhasterol + 2 oxidized [NADPH--hemoprotein reductase] + 3 H2O + 2 H(+). The enzyme catalyses 3-dehydro-6-deoxoteasterone + 2 reduced [NADPH--hemoprotein reductase] + 2 O2 = 3-dehydroteasterone + 2 oxidized [NADPH--hemoprotein reductase] + 3 H2O + 2 H(+). The protein operates within plant hormone biosynthesis; brassinosteroid biosynthesis. Functionally, mediates Baeyer-Villiger oxidation and catalyzes the C6-oxidation step and lactonization in brassinosteroids biosynthesis. Converts 6-deoxocastasterone (6-deoxoCS) to castasterone (CS), and castasterone to brassinolide (BL). May also convert 6-deoxoteasterone (6-deoxoTE) to teasterone (TE), 3-dehydro-6-deoxoteasterone (6-deoxo3DT, 6-deoxo-3-DHT) to 3-dehydroteasterone (3DT, 3-DHT), and 6-deoxotyphasterol (6-deoxoTY) to typhasterol (TY). Also seems to be able to convert teasterone (TE) and typhasterol (TY) to 7-oxateasterone (7-OXTE) and 7-oxatyphasterol (7-OXTY), respectively. Catalyzes the conversion of 6-deoxo-28-norteasterone (6-deoxo-28-norTE) to 28-norteasterone (28-norTE), 6-deoxo-28-nordeoxoteasterone (6-deoxo-28-nor-3-DHT) to 28-nordeoxoteasterone (28-nor-3-DHT), 6-deoxo-28-nortyphasterol (6-deoxo-28-norTY) to 28-nortyphasterol (28-norTY) and 6-deoxo-28-norcastasterone (6-deoxo-28-norCS) to 28-norcastasterone (28-norCS). Involved in a negative regulation of responses to abscisic acid (ABA) and drought tolerance. The chain is Cytochrome P450 85A2 (CYP85A2) from Arabidopsis thaliana (Mouse-ear cress).